The sequence spans 93 residues: Small ribosomal subunit protein uS19 (93 aa).

The interval 74–93 is disordered; it reads FSPTRTFRGHVKDDRKSKRR. The span at 83–93 shows a compositional bias: basic and acidic residues; it reads HVKDDRKSKRR.

It belongs to the universal ribosomal protein uS19 family.

Protein S19 forms a complex with S13 that binds strongly to the 16S ribosomal RNA. The protein is Small ribosomal subunit protein uS19 of Streptomyces griseus subsp. griseus (strain JCM 4626 / CBS 651.72 / NBRC 13350 / KCC S-0626 / ISP 5235).